Reading from the N-terminus, the 757-residue chain is 5-methyltetrahydropteroyltriglutamate--homocysteine methyltransferase (757 aa).

Residues 15–18 (RELK) and Lys-114 each bind 5-methyltetrahydropteroyltri-L-glutamate. L-homocysteine contacts are provided by residues 428–430 (IGS) and Glu-481. L-methionine is bound by residues 428–430 (IGS) and Glu-481. 5-methyltetrahydropteroyltri-L-glutamate is bound by residues 512-513 (RC) and Trp-558. Residue Asp-596 coordinates L-homocysteine. Asp-596 contributes to the L-methionine binding site. Glu-602 serves as a coordination point for 5-methyltetrahydropteroyltri-L-glutamate. Zn(2+) contacts are provided by His-639, Cys-641, and Glu-663. His-692 serves as the catalytic Proton donor. Cys-724 contacts Zn(2+).

This sequence belongs to the vitamin-B12 independent methionine synthase family. Zn(2+) is required as a cofactor.

The enzyme catalyses 5-methyltetrahydropteroyltri-L-glutamate + L-homocysteine = tetrahydropteroyltri-L-glutamate + L-methionine. It functions in the pathway amino-acid biosynthesis; L-methionine biosynthesis via de novo pathway; L-methionine from L-homocysteine (MetE route): step 1/1. Its function is as follows. Catalyzes the transfer of a methyl group from 5-methyltetrahydrofolate to homocysteine resulting in methionine formation. The chain is 5-methyltetrahydropteroyltriglutamate--homocysteine methyltransferase from Lactococcus lactis subsp. cremoris (strain SK11).